The following is a 455-amino-acid chain: MDTAGPPAPAGTEGDGPGGSTGETSRRLSKEQIFVLVSAASMNLGCMMTYSILGPFFPKEAEKKGASNTTIGMIFGCYALFELLASLVFGKYLVHIGAKFMFIAGMFVSGGVTILFGVLDQLPEGPIFIAMCFLVRIVDAIGFGAAITASSSILAKAFPNNVATVMGSLEVFSGLGLVAGPPLGGLLYQSFGYEVPFIFLGCIVLLMIPLNLCILPSYESDAGKQSFWKLVTLPKIGLIAFVIISLSSCFGFLDPTLSLFVMKKFSLSTGYVGLVFLGLSLSYAISSPLFGLLSDKMPNLRKWFLVFGNLITAGCYMLLGPIPLLHIKSQLWLLVLVLVINGVSAGMSIIPTFPEMLSCAYANGFEDGISTLGLVSGLFGAMWSVGAFMGPILGGFLCEKIGFEWAAAIQGLWTLLSGVAMALFYLWEDSTMRRSKAQNILGTEEEQAALLPNDT.

M1 is modified (N-acetylmethionine). The tract at residues M1–R26 is disordered. Topologically, residues M1–Q32 are cytoplasmic. The residue at position 20 (S20) is a Phosphoserine. The chain crosses the membrane as a helical span at residues I33–L53. At G54–T69 the chain is on the extracellular side. The chain crosses the membrane as a helical span at residues T70 to G90. At K91–K99 the chain is on the cytoplasmic side. The chain crosses the membrane as a helical span at residues F100 to D120. Residues Q121–P126 lie on the Extracellular side of the membrane. A helical transmembrane segment spans residues I127–I147. At T148 to M166 the chain is on the cytoplasmic side. The helical transmembrane segment at G167–L187 threads the bilayer. The Extracellular segment spans residues Y188–E194. A helical transmembrane segment spans residues V195–L215. Residues P216–T232 are Cytoplasmic-facing. A helical transmembrane segment spans residues L233–L253. Topologically, residues D254–Y271 are extracellular. A helical transmembrane segment spans residues V272 to L292. The Cytoplasmic portion of the chain corresponds to L293–W303. The chain crosses the membrane as a helical span at residues F304–L324. Residues L325–Q330 are Extracellular-facing. Residues L331–P351 form a helical membrane-spanning segment. Topologically, residues T352–S376 are cytoplasmic. The helical transmembrane segment at G377–L397 threads the bilayer. Topologically, residues C398 to A406 are extracellular. A helical transmembrane segment spans residues A407–W427. Over E428–T455 the chain is Cytoplasmic.

As to expression, expressed in brain structures, particularly in hippocampus, cortex, and cerebellum (at protein level). Expressed in astrocytes and hippocampal neurons (at protein level). Expressed in peritoneal mast cells.

The protein localises to the cytoplasmic vesicle. The protein resides in the secretory vesicle membrane. It localises to the secretory vesicle. Its subcellular location is the synaptic vesicle membrane. The enzyme catalyses spermine(in) + n H(+)(out) = spermine(out) + n H(+)(in). It catalyses the reaction spermidine(in) + n H(+)(out) = spermidine(out) + n H(+)(in). The catalysed reaction is serotonin(in) + n H(+)(out) = serotonin(out) + n H(+)(in). Functionally, proton-coupled polyamine antiporter involved in the translocation of polyamines from cytosol into secretory vesicles prior to their release via exocytosis. Uses the electrochemical proton gradient generated by a V-type proton-pumping ATPase to couple the efflux of protons with the uptake of a polyamine molecule. Facilitates vesicular storage of spermine and spermidine in astrocytes with an impact on glutamatergic neuronal transmission and memory formation. Upon antigen stimulation, regulates polyamine accumulation and release in mast cell secretory granules, which in turn potentiates mast cell degranulation and histamine secretion. This chain is MFS-type transporter SLC18B1, found in Rattus norvegicus (Rat).